Reading from the N-terminus, the 374-residue chain is Carbamoyl phosphate synthase small chain (374 aa).

Residues 1-186 are CPSase; it reads MTEHAILVLE…DRNECKRAAP (186 aa). L-glutamine contacts are provided by S47, G237, and G239. A Glutamine amidotransferase type-1 domain is found at 189-374; sequence KVVAYDYGVK…RFITMMAAQS (186 aa). The Nucleophile role is filled by C265. L-glutamine contacts are provided by L266, Q269, N307, G309, and F310. Active-site residues include H349 and E351.

The protein belongs to the CarA family. As to quaternary structure, composed of two chains; the small (or glutamine) chain promotes the hydrolysis of glutamine to ammonia, which is used by the large (or ammonia) chain to synthesize carbamoyl phosphate. Tetramer of heterodimers (alpha,beta)4.

It catalyses the reaction hydrogencarbonate + L-glutamine + 2 ATP + H2O = carbamoyl phosphate + L-glutamate + 2 ADP + phosphate + 2 H(+). The enzyme catalyses L-glutamine + H2O = L-glutamate + NH4(+). It participates in amino-acid biosynthesis; L-arginine biosynthesis; carbamoyl phosphate from bicarbonate: step 1/1. It functions in the pathway pyrimidine metabolism; UMP biosynthesis via de novo pathway; (S)-dihydroorotate from bicarbonate: step 1/3. Functionally, small subunit of the glutamine-dependent carbamoyl phosphate synthetase (CPSase). CPSase catalyzes the formation of carbamoyl phosphate from the ammonia moiety of glutamine, carbonate, and phosphate donated by ATP, constituting the first step of 2 biosynthetic pathways, one leading to arginine and/or urea and the other to pyrimidine nucleotides. The small subunit (glutamine amidotransferase) binds and cleaves glutamine to supply the large subunit with the substrate ammonia. In Xylella fastidiosa (strain Temecula1 / ATCC 700964), this protein is Carbamoyl phosphate synthase small chain.